We begin with the raw amino-acid sequence, 295 residues long: Pyridoxal 5'-phosphate synthase subunit PdxS (295 aa).

Asp-25 is a binding site for D-ribose 5-phosphate. Lys-82 (schiff-base intermediate with D-ribose 5-phosphate) is an active-site residue. A D-ribose 5-phosphate-binding site is contributed by Gly-154. Arg-166 contacts D-glyceraldehyde 3-phosphate. D-ribose 5-phosphate-binding positions include Gly-215 and 236-237 (GS).

Belongs to the PdxS/SNZ family. As to quaternary structure, in the presence of PdxT, forms a dodecamer of heterodimers.

It catalyses the reaction aldehydo-D-ribose 5-phosphate + D-glyceraldehyde 3-phosphate + L-glutamine = pyridoxal 5'-phosphate + L-glutamate + phosphate + 3 H2O + H(+). The protein operates within cofactor biosynthesis; pyridoxal 5'-phosphate biosynthesis. In terms of biological role, catalyzes the formation of pyridoxal 5'-phosphate from ribose 5-phosphate (RBP), glyceraldehyde 3-phosphate (G3P) and ammonia. The ammonia is provided by the PdxT subunit. Can also use ribulose 5-phosphate and dihydroxyacetone phosphate as substrates, resulting from enzyme-catalyzed isomerization of RBP and G3P, respectively. This chain is Pyridoxal 5'-phosphate synthase subunit PdxS, found in Dictyoglomus turgidum (strain DSM 6724 / Z-1310).